Reading from the N-terminus, the 188-residue chain is mRNA transport factor GFD1 (188 aa).

The tract at residues 1–128 (MPLESIWADA…KTQSKQDTAS (128 aa)) is disordered. Residues 18–28 (KQKPSHKRSNN) are compositionally biased toward basic residues. Over residues 29–44 (NKKNNNSRWSNESSSN) the composition is skewed to low complexity. Residues 59 to 79 (GNHESKTKNKIKETLPREKKP) are compositionally biased toward basic and acidic residues. Residues serine 87, serine 106, and serine 111 each carry the phosphoserine modification. Over residues 112–128 (PSKMKTTKTQSKQDTAS) the composition is skewed to low complexity. A coiled-coil region spans residues 119-164 (KTQSKQDTASKMKLLKKKIEEQREILQKTHHKNQQQQVLMDFLNDE).

In terms of assembly, interacts with GLE1, NUP42, NAB2, ZDS1 and probably DBP5. Forms a complex with GLE1 and NAB2.

The protein localises to the cytoplasm. The protein resides in the nucleus. It is found in the nuclear pore complex. It localises to the nucleus membrane. High-copy suppressor of mutant alleles of ATP-dependent RNA helicase DBP5, which is involved in mRNA export from the nucleus. It may also play an important role in a late stage of NAB2-mRNA export. The chain is mRNA transport factor GFD1 (GFD1) from Saccharomyces cerevisiae (strain ATCC 204508 / S288c) (Baker's yeast).